A 272-amino-acid chain; its full sequence is MAAKVARLAAAASSLPFVCAVYAEEKESKSQLVKPKQLPIYCLPPLKSKYIEEQPGRLQKQFSSIRQTTGRYIGWCKDAFFFAKNGIVDSIQFGKDAYVYLKNPPPDFLPRVGIITISGLAGVVLARKDSRFKKIAYPLGLTTLGISVCYPAQAVVIAKITGKKVISASHQTYEAVRSLWTKKEDASKLQQESKSVTQENKKNREISNVQFESAIESRSSNRTESSPIESWSTKDPLPSSGTVKTTKFKPDPKLMDHGQSSPEDVDMYSTRS.

A mitochondrion-targeting transit peptide spans 1–24; that stretch reads MAAKVARLAAAASSLPFVCAVYAE. Topologically, residues 28–107 are mitochondrial intermembrane; it reads SKSQLVKPKQ…YVYLKNPPPD (80 aa). A helical transmembrane segment spans residues 108 to 126; sequence FLPRVGIITISGLAGVVLA. At 127-134 the chain is on the mitochondrial matrix side; that stretch reads RKDSRFKK. A helical membrane pass occupies residues 135–152; that stretch reads IAYPLGLTTLGISVCYPA. At 153–272 the chain is on the mitochondrial intermembrane side; sequence QAVVIAKITG…EDVDMYSTRS (120 aa). Residues 187 to 272 are disordered; it reads SKLQQESKSV…EDVDMYSTRS (86 aa). 2 stretches are compositionally biased toward polar residues: residues 188–198 and 206–245; these read KLQQESKSVTQ and ISNVQFESAIESRSSNRTESSPIESWSTKDPLPSSGTVKT.

Belongs to the apolipoprotein O/MICOS complex subunit Mic27 family. In terms of assembly, component of the mitochondrial contact site and cristae organizing system (MICOS) complex (also known as MINOS or MitOS complex).

The protein resides in the mitochondrion inner membrane. Its function is as follows. Component of the MICOS complex, a large protein complex of the mitochondrial inner membrane that plays crucial roles in the maintenance of crista junctions, inner membrane architecture, and formation of contact sites to the outer membrane. The protein is MICOS complex subunit MIC27 (APOOL) of Gallus gallus (Chicken).